Consider the following 345-residue polypeptide: Serpentine receptor class beta-5 (345 aa).

Residues 1 to 22 (MAEINQTKCDLAFQISYHPIYR) lie on the Extracellular side of the membrane. A glycan (N-linked (GlcNAc...) asparagine) is linked at N5. Residues 23-43 (LAQFWTLSVSLLAVPSLLYFL) form a helical membrane-spanning segment. Residues 44 to 57 (LKRVLLLPFHGNLK) lie on the Cytoplasmic side of the membrane. A helical membrane pass occupies residues 58–78 (CLLITYFSSIFLYALVLCFDF). Residues 79-103 (SYQCLIPFIVTTKCSLIIDQTLYKC) are Extracellular-facing. The chain crosses the membrane as a helical span at residues 104–124 (GHMTSLFFLTTPMLLPFGFSI). The Cytoplasmic portion of the chain corresponds to 125-142 (ERFVAVGMAYKYEKMRTL). A helical membrane pass occupies residues 143–163 (LGPILCFILVAPNFVVFYFLF). The Extracellular portion of the chain corresponds to 164-189 (RDEQFTDSFISFLVLPNTPAVQFNNY). A helical membrane pass occupies residues 190-210 (LWFLLYAKIGNFCCNCVLLIF). The Cytoplasmic portion of the chain corresponds to 211-241 (HKRFKNTYLKKKTSLSVRYALEEISNSSKFT). The helical transmembrane segment at 242–262 (LILTFTHLVFFGAYTIGSILV) threads the bilayer. Residues 263 to 280 (RTLGESFFGNFLNFYVAR) are Extracellular-facing. A helical membrane pass occupies residues 281–301 (GVNCAVPTYNLLIAFVGLISL). The Cytoplasmic segment spans residues 302–345 (RQLNSRRHAKILTKVLIRVTGQEGARNYDDIIMQQWNTVSNRTR).

The protein belongs to the nematode receptor-like protein srb family. Expressed throughout the head.

Its subcellular location is the cell membrane. The protein resides in the perikaryon. The protein localises to the cell projection. It is found in the dendrite. G-protein coupled receptor. Plays a role in the navigational capacity of sperm and promotes the targeting of sperm derived from males to the fertilization site in the uterus of hermaphrodites. In Caenorhabditis elegans, this protein is Serpentine receptor class beta-5.